The primary structure comprises 123 residues: NADH dehydrogenase [ubiquinone] 1 beta subcomplex subunit 7 (123 aa).

The interval 1–32 (MGTKLSVSLEGASTPETAPRVDRPPTFDPQYG) is disordered. The CHCH domain maps to 59 to 102 (RDYCAHHLISLMKCQTQNAPFAGHACDGERGAWDKCEYDDHIMR). Short sequence motifs (cx9C motif) lie at residues 62-72 (CAHHLISLMKC) and 84-94 (CDGERGAWDKC). 2 disulfides stabilise this stretch: Cys-62–Cys-94 and Cys-72–Cys-84.

This sequence belongs to the complex I NDUFB7 subunit family. In terms of assembly, complex I is composed of 45 different subunits.

It localises to the mitochondrion. It is found in the mitochondrion inner membrane. Its subcellular location is the mitochondrion intermembrane space. Accessory subunit of the mitochondrial membrane respiratory chain NADH dehydrogenase (Complex I), that is believed not to be involved in catalysis. Complex I functions in the transfer of electrons from NADH to the respiratory chain. The immediate electron acceptor for the enzyme is believed to be ubiquinone. In Caenorhabditis elegans, this protein is NADH dehydrogenase [ubiquinone] 1 beta subcomplex subunit 7.